Here is a 221-residue protein sequence, read N- to C-terminus: N-acetyltransferase 8F1 (221 aa).

Residues 53–73 (LVLVSGSWLLAVVCIFFLLLL) form a helical membrane-spanning segment. The region spanning 69 to 219 (FLLLLLRFLA…RTIQLKYPFP (151 aa)) is the N-acetyltransferase domain.

It belongs to the camello family.

It is found in the membrane. May play a role in regulation of gastrulation. This chain is N-acetyltransferase 8F1, found in Rattus norvegicus (Rat).